We begin with the raw amino-acid sequence, 758 residues long: Vitamin K-dependent gamma-carboxylase (758 aa).

Residues 1 to 34 form a disordered region; the sequence is MAVSARPARAPRGSDKVKKDKAAQTSGPRQGSRM. At alanine 2 the chain carries N-acetylalanine. Over 2-60 the chain is Cytoplasmic; the sequence is AVSARPARAPRGSDKVKKDKAAQTSGPRQGSRMGKLLGFEWTDVSSWERLVTLLNRPTD. The span at 12 to 22 shows a compositional bias: basic and acidic residues; the sequence is RGSDKVKKDKA. A helical membrane pass occupies residues 61 to 81; the sequence is PAGLAVFRFLFGLMMVLDIPQ. The Lumenal segment spans residues 82–113; the sequence is ERGLSSLDRRYLDGLEVCRFPLLDALQPLPLD. The cysteines at positions 99 and 450 are disulfide-linked. The helical transmembrane segment at 114–134 threads the bilayer; it reads WMYLIYTIMFLGALGMMLGLC. Over 135–136 the chain is Cytoplasmic; sequence YR. The helical transmembrane segment at 137-157 threads the bilayer; sequence ISCVLFLLPYWYVFLLDKTSW. Residues 158–292 lie on the Lumenal side of the membrane; sequence NNHSYLYGLL…VSYFHCMNSQ (135 aa). Residues 293–313 traverse the membrane as a helical segment; it reads LFSIGMFPYVMLASSPLFCSP. The Cytoplasmic segment spans residues 314–363; the sequence is EWPRKLVAHCPKKLQELLPLRTAPQPSTSCMYKRSRARGSQKPGLRHKLS. A helical membrane pass occupies residues 364–384; sequence TAFTLLYLLEQLFLPYSHFLT. Topologically, residues 385–758 are lumenal; the sequence is QGYNNWTNGL…PDSHPVHSEF (374 aa). Residues 727–758 form a disordered region; it reads PFEPAGEPSPVNTDSSNPNPPEPDSHPVHSEF. Residues 749 to 758 are compositionally biased toward basic and acidic residues; it reads PDSHPVHSEF.

As to quaternary structure, monomer. May interact with CALU. In terms of processing, the N-terminus is blocked.

The protein localises to the endoplasmic reticulum membrane. It catalyses the reaction 4-carboxy-L-glutamyl-[protein] + 2,3-epoxyphylloquinone + H2O + H(+) = phylloquinol + L-glutamyl-[protein] + CO2 + O2. Its function is as follows. Mediates the vitamin K-dependent carboxylation of glutamate residues to calcium-binding gamma-carboxyglutamate (Gla) residues with the concomitant conversion of the reduced hydroquinone form of vitamin K to vitamin K epoxide. Catalyzes gamma-carboxylation of various proteins, such as blood coagulation factors (F2, F7, F9 and F10), osteocalcin (BGLAP) or matrix Gla protein (MGP). The protein is Vitamin K-dependent gamma-carboxylase (GGCX) of Bos taurus (Bovine).